The primary structure comprises 570 residues: Sulfite reductase [NADPH] hemoprotein beta-component (570 aa).

4 residues coordinate [4Fe-4S] cluster: C434, C440, C479, and C483. C483 contributes to the siroheme binding site.

It belongs to the nitrite and sulfite reductase 4Fe-4S domain family. In terms of assembly, alpha(8)-beta(8). The alpha component is a flavoprotein, the beta component is a hemoprotein. Siroheme is required as a cofactor. It depends on [4Fe-4S] cluster as a cofactor.

The enzyme catalyses hydrogen sulfide + 3 NADP(+) + 3 H2O = sulfite + 3 NADPH + 4 H(+). The protein operates within sulfur metabolism; hydrogen sulfide biosynthesis; hydrogen sulfide from sulfite (NADPH route): step 1/1. Component of the sulfite reductase complex that catalyzes the 6-electron reduction of sulfite to sulfide. This is one of several activities required for the biosynthesis of L-cysteine from sulfate. The chain is Sulfite reductase [NADPH] hemoprotein beta-component from Cronobacter sakazakii (strain ATCC BAA-894) (Enterobacter sakazakii).